The chain runs to 350 residues: F(420)H(2) dehydrogenase subunit H (350 aa).

8 helical membrane-spanning segments follow: residues 21–41 (GTVGLVLVGAIFLGGMAAVWI), 94–114 (VFMLTSLFLMLVAIPVGAVFI), 128–148 (ISILFIEAVSAINIFGIFMAA), 173–193 (PLGIAIVSVAVMTGSLNIIDI), 200–220 (FVWNIFLQPIGFVVFFIALMA), 261–281 (ILGSFLVALLFLGGWNVPAFV), 288–308 (GLIAPTGILLLKTVLVLMTII), and 330–350 (LLPLSLLNLAWAVGLGLYLGA).

The protein belongs to the complex I subunit 1 family. As to quaternary structure, the FPO complex is composed of at least 13 different subunits. FpoA, FpoH, FpoJ, FpoK, FpoL, FpoM and FpoN proteins constitute the membrane sector of the complex.

The protein resides in the cell membrane. It catalyses the reaction methanophenazine + reduced coenzyme F420-(gamma-L-Glu)(n) = dihydromethanophenazine + oxidized coenzyme F420-(gamma-L-Glu)(n) + H(+). Component of the F(420)H(2) dehydrogenase (FPO complex) which is part of the energy-conserving F(420)H(2):heterodisulfide oxidoreductase system. The membrane-bound electron transfer system of the complex plays an important role in the metabolism of methylotrophic methanogens when the organisms grow on methanol or methylamines. Catalyzes the oxidation of methanophenazine to dihydromethanophenazine. It shuttles electrons from F(420)H(2), via FAD and iron-sulfur (Fe-S) centers, to methanophenazine (an electron carrier in the membrane). It couples the redox reaction to proton translocation (for every two electrons transferred, two hydrogen ions are translocated across the cytoplasmic membrane), and thus conserves the redox energy in a proton gradient. It also catalyzes the oxidation of F(420)H(2) with quinones such as 2,3-dimethyl-1,4-naphthoquinone, 2-methyl-1,4-naphthoquinone and tetramethyl-p-benzoquinone. The sequence is that of F(420)H(2) dehydrogenase subunit H from Methanosarcina mazei (strain ATCC BAA-159 / DSM 3647 / Goe1 / Go1 / JCM 11833 / OCM 88) (Methanosarcina frisia).